The following is a 462-amino-acid chain: Glycoprotein endo-alpha-1,2-mannosidase (462 aa).

The Cytoplasmic portion of the chain corresponds to 1-8; the sequence is MAKFRRRT. A helical; Signal-anchor for type II membrane protein membrane pass occupies residues 9-29; it reads CIILALFILFIFSLMMGLKML. The Lumenal portion of the chain corresponds to 30-462; that stretch reads RPNTATFGAP…YALDRQLPVS (433 aa). The segment at 60 to 462 is catalytic; sequence DFQKSDRINS…YALDRQLPVS (403 aa).

The protein belongs to the glycosyl hydrolase 99 family. Post-translationally, undergoes proteolytic cleavage in the C-terminal region. In terms of tissue distribution, highly expressed in the liver and kidney. Expressed at lower levels in muscle, pancreas, heart, placenta, lung and brain.

Its subcellular location is the golgi apparatus membrane. It catalyses the reaction N-{alpha-Glc-(1-&gt;3)-alpha-Man-(1-&gt;2)-alpha-Man-(1-&gt;2)-alpha-Man-(1-&gt;3)-[alpha-Man-(1-&gt;2)-alpha-Man-(1-&gt;3)-[alpha-Man-(1-&gt;2)-alpha-Man-(1-&gt;6)]-alpha-Man-(1-&gt;6)]-beta-Man-(1-&gt;4)-beta-GlcNAc-(1-&gt;4)-beta-GlcNAc}-L-asparaginyl-[protein] + H2O = alpha-D-glucosyl-(1-&gt;3)-D-mannopyranose + N(4)-{alpha-D-Man-(1-&gt;2)-alpha-D-Man-(1-&gt;3)-[alpha-D-Man-(1-&gt;2)-alpha-D-Man-(1-&gt;3)-[alpha-D-Man-(1-&gt;2)-alpha-D-Man-(1-&gt;6)]-alpha-D-Man-(1-&gt;6)]-beta-D-Man-(1-&gt;4)-beta-D-GlaNAc-(1-&gt;4)-beta-D-GlcNAc}-L-asparaginyl-[protein] (N-glucan mannose isomer 8A1,2,3B1,2). This Homo sapiens (Human) protein is Glycoprotein endo-alpha-1,2-mannosidase (MANEA).